The following is a 457-amino-acid chain: tRNA-2-methylthio-N(6)-dimethylallyladenosine synthase (457 aa).

An MTTase N-terminal domain is found at 3–120 (KKVYVKTFGC…LPQMIDARRE (118 aa)). Residues Cys-12, Cys-49, Cys-83, Cys-157, Cys-161, and Cys-164 each coordinate [4Fe-4S] cluster. The Radical SAM core domain maps to 143–377 (RVEGPSAFVS…QATIEENVAR (235 aa)). A TRAM domain is found at 380 to 447 (QSMLGKVERI…PHSLRGELVL (68 aa)).

The protein belongs to the methylthiotransferase family. MiaB subfamily. As to quaternary structure, monomer. It depends on [4Fe-4S] cluster as a cofactor.

It is found in the cytoplasm. It carries out the reaction N(6)-dimethylallyladenosine(37) in tRNA + (sulfur carrier)-SH + AH2 + 2 S-adenosyl-L-methionine = 2-methylsulfanyl-N(6)-dimethylallyladenosine(37) in tRNA + (sulfur carrier)-H + 5'-deoxyadenosine + L-methionine + A + S-adenosyl-L-homocysteine + 2 H(+). Its function is as follows. Catalyzes the methylthiolation of N6-(dimethylallyl)adenosine (i(6)A), leading to the formation of 2-methylthio-N6-(dimethylallyl)adenosine (ms(2)i(6)A) at position 37 in tRNAs that read codons beginning with uridine. In Burkholderia mallei (strain NCTC 10247), this protein is tRNA-2-methylthio-N(6)-dimethylallyladenosine synthase.